Consider the following 281-residue polypeptide: 4-diphosphocytidyl-2-C-methyl-D-erythritol kinase (281 aa).

The active site involves Lys15. 98–108 provides a ligand contact to ATP; the sequence is PTGAGLGGGSS. Asp140 is a catalytic residue.

It belongs to the GHMP kinase family. IspE subfamily.

The enzyme catalyses 4-CDP-2-C-methyl-D-erythritol + ATP = 4-CDP-2-C-methyl-D-erythritol 2-phosphate + ADP + H(+). It functions in the pathway isoprenoid biosynthesis; isopentenyl diphosphate biosynthesis via DXP pathway; isopentenyl diphosphate from 1-deoxy-D-xylulose 5-phosphate: step 3/6. Catalyzes the phosphorylation of the position 2 hydroxy group of 4-diphosphocytidyl-2C-methyl-D-erythritol. This Neisseria gonorrhoeae (strain ATCC 700825 / FA 1090) protein is 4-diphosphocytidyl-2-C-methyl-D-erythritol kinase.